The sequence spans 597 residues: Sodium/mannose cotransporter SLC5A10 (597 aa).

Residues 1 to 16 are Extracellular-facing; sequence MVADNSTSDPHAPGPQ. N-linked (GlcNAc...) asparagine glycosylation occurs at Asn-5. The chain crosses the membrane as a helical span at residues 17–37; it reads LSVTDIVVITVYFALNVAVGI. Residues 38 to 73 are Cytoplasmic-facing; that stretch reads WSSCRASRNTVSGYFLAGRDMTWWPIGASLFGSSEG. The residue at position 49 (Ser-49) is a Phosphoserine. A helical membrane pass occupies residues 74–94; it reads SGLFIGLAGSGAAGGLAVAGF. Residues 95–100 are Extracellular-facing; that stretch reads DWNATY. Residues 101-121 traverse the membrane as a helical segment; it reads VLLALAWVFGAIYISSEIVTL. Residues 122-137 are Cytoplasmic-facing; it reads AEYIQKRFGGQRIRMY. A helical transmembrane segment spans residues 138-158; it reads LSVLSLLLSVFTKISLDLYAG. The Extracellular segment spans residues 159-171; the sequence is ALFVHICLGWNFY. A helical transmembrane segment spans residues 172-194; the sequence is LSTILTLTITALYTITGGLVAVI. The Cytoplasmic portion of the chain corresponds to 195-200; it reads YTDALQ. Residues 201 to 219 traverse the membrane as a helical segment; it reads TLIMVVGAVILAIKAFHQI. The Extracellular portion of the chain corresponds to 220–265; the sequence is DGYGQMEAAYARAIPSRTVANTTCHLPRADAMHMFRDPYTGDLPWT. A helical transmembrane segment spans residues 266 to 286; sequence GMTFGLTIMATWYWCTDQVIV. The Cytoplasmic portion of the chain corresponds to 287–301; the sequence is QRSLSARNLNHAKAG. A helical transmembrane segment spans residues 302 to 322; sequence SILASYLKMLPMGLMIMPGMI. Residues 323–367 are Extracellular-facing; sequence SRALFPDEVGCVVPSECLRACGAEIGCSNIAYPKLVMELMPVGLR. Residues 368–390 traverse the membrane as a helical segment; sequence GLMIAVMMPALMSSLSSIFNSSS. Residues 391 to 410 are Cytoplasmic-facing; sequence TLFTMDIWRRLRPCASEREL. Residues 411–431 form a helical membrane-spanning segment; sequence LLVGRLVIVVLIGVSVAWIPV. The Extracellular segment spans residues 432 to 444; the sequence is LQGSNGGQLFIYM. A helical membrane pass occupies residues 445–465; that stretch reads QSVTSSLAPPVTAVFTLGIFW. The Cytoplasmic segment spans residues 466–472; it reads QRANEQG. Residues 473 to 493 form a helical membrane-spanning segment; the sequence is AFWGLLAGLAVGATRLVLEFL. Topologically, residues 494–514 are extracellular; it reads HPAPPCGAADTRPAVLSQLHY. A helical transmembrane segment spans residues 515 to 535; sequence LHFAVALFVLTGAVAVGGSLL. Residues 536–576 are Cytoplasmic-facing; the sequence is TPPPRRHQIENLTWWTLTRDLSLGAKAGDGQTPQRYTFWAR. The helical transmembrane segment at 577-597 threads the bilayer; sequence VCGFNAILLMCVNIFFYAYFA.

It belongs to the sodium:solute symporter (SSF) (TC 2.A.21) family. As to expression, expressed only in kidney.

The protein localises to the apical cell membrane. It catalyses the reaction D-mannose(out) + Na(+)(out) = D-mannose(in) + Na(+)(in). The enzyme catalyses D-fructopyranose(out) + Na(+)(out) = D-fructopyranose(in) + Na(+)(in). In terms of biological role, electrogenic Na+-coupled sugar symporter that actively transports D-mannose or D-fructose at the plasma membrane, with a Na+ to sugar coupling ratio of 1:1. Transporter activity is driven by a transmembrane Na+ electrochemical gradient set by the Na+/K+ pump. Exclusively recognizes sugar substrates having a pyranose ring with an axial hydroxyl group on carbon 2. Has likely evolved to enable renal reabsorption of D-mannose, an important constituent of oligosaccharide chains of glycoproteins. Contributes to dietary D-fructose reabsorption from glomerular filtrate across the brush border of the kidney. This is Sodium/mannose cotransporter SLC5A10 (SLC5A10) from Oryctolagus cuniculus (Rabbit).